Reading from the N-terminus, the 356-residue chain is Tyrosine recombinase XerS (356 aa).

One can recognise a Core-binding (CB) domain in the interval valine 16 to threonine 121. One can recognise a Tyr recombinase domain in the interval alanine 169–aspartate 354. Residues arginine 210, lysine 234, histidine 306, arginine 309, and histidine 332 contribute to the active site. The O-(3'-phospho-DNA)-tyrosine intermediate role is filled by tyrosine 341.

It belongs to the 'phage' integrase family. XerS subfamily.

It is found in the cytoplasm. Its activity is regulated as follows. FtsK is required for recombination. In terms of biological role, site-specific tyrosine recombinase, which acts by catalyzing the cutting and rejoining of the recombining DNA molecules. Essential to convert dimers of the bacterial chromosome into monomers to permit their segregation at cell division. The chain is Tyrosine recombinase XerS from Streptococcus pyogenes serotype M28 (strain MGAS6180).